Consider the following 964-residue polypeptide: uncharacterized protein (964 aa).

2 disordered regions span residues 1–31 and 169–199; these read MDSE…SDCE and EETY…DEIS. The segment covering 10 to 27 has biased composition (polar residues); it reads HSICNSVSSGENYKSPES. Residues 656–840 adopt a coiled-coil conformation; it reads EVMESLQVEI…LILNQTSMAK (185 aa).

This is an uncharacterized protein from Caenorhabditis elegans.